Reading from the N-terminus, the 151-residue chain is Nucleoside diphosphate kinase (151 aa).

ATP contacts are provided by Lys9, Phe57, Arg85, Thr91, Arg102, and Asn112. The active-site Pros-phosphohistidine intermediate is His115.

Belongs to the NDK family. It depends on Mg(2+) as a cofactor.

It localises to the cytoplasm. It carries out the reaction a 2'-deoxyribonucleoside 5'-diphosphate + ATP = a 2'-deoxyribonucleoside 5'-triphosphate + ADP. The enzyme catalyses a ribonucleoside 5'-diphosphate + ATP = a ribonucleoside 5'-triphosphate + ADP. In terms of biological role, major role in the synthesis of nucleoside triphosphates other than ATP. The ATP gamma phosphate is transferred to the NDP beta phosphate via a ping-pong mechanism, using a phosphorylated active-site intermediate. In Archaeoglobus fulgidus (strain ATCC 49558 / DSM 4304 / JCM 9628 / NBRC 100126 / VC-16), this protein is Nucleoside diphosphate kinase.